A 456-amino-acid polypeptide reads, in one-letter code: Signal transduction histidine-protein kinase ArlS (456 aa).

A run of 2 helical transmembrane segments spans residues 13–33 (LITT…IIFF) and 157–177 (IVAL…SYIF). The HAMP domain maps to 179–232 (SQITKPIVTMSNKMNQIRRDGFQNKLELTTNYEETDNLIDTFNEMMYQIEESFN). The region spanning 240-456 (DASHELRTPL…TFKISFPVLN (217 aa)) is the Histidine kinase domain. His243 is modified (phosphohistidine; by autocatalysis).

In terms of processing, autophosphorylated.

It localises to the cell membrane. It catalyses the reaction ATP + protein L-histidine = ADP + protein N-phospho-L-histidine.. Its function is as follows. Member of the two-component regulatory system ArlS/ArlR. ArlS probably functions as a sensor protein kinase which is autophosphorylated at a histidine residue and transfers its phosphate group to ArlR. In Staphylococcus epidermidis (strain ATCC 35984 / DSM 28319 / BCRC 17069 / CCUG 31568 / BM 3577 / RP62A), this protein is Signal transduction histidine-protein kinase ArlS (arlS).